The chain runs to 372 residues: Heat-inducible transcription repressor HrcA (372 aa).

It belongs to the HrcA family.

Functionally, negative regulator of class I heat shock genes (grpE-dnaK-dnaJ and groELS operons). Prevents heat-shock induction of these operons. The protein is Heat-inducible transcription repressor HrcA of Chloroflexus aurantiacus (strain ATCC 29366 / DSM 635 / J-10-fl).